We begin with the raw amino-acid sequence, 543 residues long: Formate--tetrahydrofolate ligase (543 aa).

Residue Thr-54–Thr-61 coordinates ATP.

It belongs to the formate--tetrahydrofolate ligase family.

The enzyme catalyses (6S)-5,6,7,8-tetrahydrofolate + formate + ATP = (6R)-10-formyltetrahydrofolate + ADP + phosphate. It participates in one-carbon metabolism; tetrahydrofolate interconversion. The protein is Formate--tetrahydrofolate ligase of Thermus thermophilus (strain ATCC BAA-163 / DSM 7039 / HB27).